The following is a 545-amino-acid chain: Alpha-galactosidase A (545 aa).

The signal sequence occupies residues 1–31; that stretch reads MIQGLESIMNQGTKRILLAATLAATPWQVYG. C54 and C86 are joined by a disulfide. 4 N-linked (GlcNAc...) asparagine glycosylation sites follow: N57, N95, N101, and N131. The cysteines at positions 134 and 164 are disulfide-linked. The active-site Nucleophile is D162. N-linked (GlcNAc...) asparagine glycosylation is present at N211. Residue D220 is the Proton donor of the active site. N363 and N444 each carry an N-linked (GlcNAc...) asparagine glycan. In terms of domain architecture, Ricin B-type lectin spans 421-518; sequence CSSVVPTGLV…KNAKTDGCLT (98 aa). Disulfide bonds link C438-C452 and C477-C490.

This sequence belongs to the glycosyl hydrolase 27 family. A C-terminal Ser/Thr-rich region may provide possible sites for O-glycosylation.

It is found in the secreted. It carries out the reaction Hydrolysis of terminal, non-reducing alpha-D-galactose residues in alpha-D-galactosides, including galactose oligosaccharides, galactomannans and galactolipids.. Hydrolyzes a variety of simple alpha-D-galactoside as well as more complex molecules such as oligosaccharides and polysaccharides. The chain is Alpha-galactosidase A (aglA) from Aspergillus niger.